Here is a 104-residue protein sequence, read N- to C-terminus: Large ribosomal subunit protein bL21 (104 aa).

Belongs to the bacterial ribosomal protein bL21 family. In terms of assembly, part of the 50S ribosomal subunit. Contacts protein L20.

Its function is as follows. This protein binds to 23S rRNA in the presence of protein L20. The sequence is that of Large ribosomal subunit protein bL21 from Helicobacter pylori (strain J99 / ATCC 700824) (Campylobacter pylori J99).